Reading from the N-terminus, the 408-residue chain is Histidine--tRNA ligase (408 aa).

Belongs to the class-II aminoacyl-tRNA synthetase family. In terms of assembly, homodimer.

It localises to the cytoplasm. It catalyses the reaction tRNA(His) + L-histidine + ATP = L-histidyl-tRNA(His) + AMP + diphosphate + H(+). The protein is Histidine--tRNA ligase of Campylobacter jejuni subsp. jejuni serotype O:23/36 (strain 81-176).